We begin with the raw amino-acid sequence, 356 residues long: Vanillin synthase, chloroplastic (356 aa).

Asparagine 122 carries N-linked (GlcNAc...) asparagine glycosylation. Disulfide bonds link cysteine 159/cysteine 202 and cysteine 193/cysteine 235. The active site involves cysteine 162. Asparagine 251 is a glycosylation site (N-linked (GlcNAc...) asparagine). Cysteine 293 and cysteine 343 are joined by a disulfide. Residues histidine 302 and asparagine 322 contribute to the active site.

Belongs to the peptidase C1 family. As to quaternary structure, forms homodimers, homotrimers and homotetramers. As to expression, accumulates in the inner part of vanilla pods (at protein level). Expressed in single cells located a few cell layers from the inner epidermis.

The protein resides in the plastid. The protein localises to the chloroplast. It carries out the reaction (E)-ferulate + H2O = vanillin + acetate. The enzyme catalyses 4-O-beta-D-glucosyl-trans-ferulate + H2O = 4-O-beta-D-glucosyl-vanillin + acetate. Its pathway is aromatic compound metabolism; phenylpropanoid biosynthesis. In terms of biological role, involved in the biosynthesis of vanillin (4-hydroxy-3-methoxy-benzaldehyde) and derivative natural products, key components of vanilla pods flavor. Catalyzes the double carbon bond cleavage of ferulic acid to vanillin and of their respective glucosides via a coupled non-oxidative hydratase/lyase reaction. Inactive toward p-coumaric acid, caffeic acid and their glucosides derivatives. In Vanilla planifolia (Vanilla), this protein is Vanillin synthase, chloroplastic.